A 283-amino-acid chain; its full sequence is Flagellar filament 35 kDa core protein (283 aa).

Belongs to the bacterial flagellin family. The flagellum consists of two outer layers around a core that contains several antigenically related polypeptides.

It is found in the periplasmic flagellum. The protein resides in the periplasm. Component of the core of the flagella. The polypeptide is Flagellar filament 35 kDa core protein (flaB) (Leptospira interrogans serogroup Icterohaemorrhagiae serovar Lai (strain 56601)).